The following is a 424-amino-acid chain: Histidine--tRNA ligase (424 aa).

Belongs to the class-II aminoacyl-tRNA synthetase family. In terms of assembly, homodimer.

The protein resides in the cytoplasm. The catalysed reaction is tRNA(His) + L-histidine + ATP = L-histidyl-tRNA(His) + AMP + diphosphate + H(+). The chain is Histidine--tRNA ligase from Shigella sonnei (strain Ss046).